The sequence spans 295 residues: Pyridoxal 5'-phosphate synthase subunit PdxS (295 aa).

Asp25 provides a ligand contact to D-ribose 5-phosphate. Residue Lys82 is the Schiff-base intermediate with D-ribose 5-phosphate of the active site. D-ribose 5-phosphate is bound at residue Gly154. Residue Arg166 participates in D-glyceraldehyde 3-phosphate binding. D-ribose 5-phosphate contacts are provided by residues Gly215 and 236–237 (GS).

Belongs to the PdxS/SNZ family. In terms of assembly, in the presence of PdxT, forms a dodecamer of heterodimers.

It catalyses the reaction aldehydo-D-ribose 5-phosphate + D-glyceraldehyde 3-phosphate + L-glutamine = pyridoxal 5'-phosphate + L-glutamate + phosphate + 3 H2O + H(+). The protein operates within cofactor biosynthesis; pyridoxal 5'-phosphate biosynthesis. Functionally, catalyzes the formation of pyridoxal 5'-phosphate from ribose 5-phosphate (RBP), glyceraldehyde 3-phosphate (G3P) and ammonia. The ammonia is provided by the PdxT subunit. Can also use ribulose 5-phosphate and dihydroxyacetone phosphate as substrates, resulting from enzyme-catalyzed isomerization of RBP and G3P, respectively. The protein is Pyridoxal 5'-phosphate synthase subunit PdxS of Bacillus anthracis (strain A0248).